The primary structure comprises 196 residues: tRNA(Phe) 7-((3-amino-3-carboxypropyl)-4-demethylwyosine(37)-N(4))-methyltransferase 1 (196 aa).

This sequence belongs to the TYW3 family.

It carries out the reaction 4-demethyl-7-[(3S)-3-amino-3-carboxypropyl]wyosine(37) in tRNA(Phe) + S-adenosyl-L-methionine = 7-[(3S)-3-amino-3-carboxypropyl]wyosine(37) in tRNA(Phe) + S-adenosyl-L-homocysteine + H(+). Its function is as follows. S-adenosyl-L-methionine-dependent methyltransferase that acts as a component of the wyosine derivatives biosynthesis pathway. Probably methylates N-4 position of wybutosine-86 to produce wybutosine-72. The polypeptide is tRNA(Phe) 7-((3-amino-3-carboxypropyl)-4-demethylwyosine(37)-N(4))-methyltransferase 1 (Pyrococcus horikoshii (strain ATCC 700860 / DSM 12428 / JCM 9974 / NBRC 100139 / OT-3)).